Consider the following 208-residue polypeptide: Methylthioribulose-1-phosphate dehydratase (208 aa).

The Zn(2+) site is built by histidine 101 and histidine 103.

This sequence belongs to the aldolase class II family. MtnB subfamily. The cofactor is Zn(2+).

The catalysed reaction is 5-(methylsulfanyl)-D-ribulose 1-phosphate = 5-methylsulfanyl-2,3-dioxopentyl phosphate + H2O. Its pathway is amino-acid biosynthesis; L-methionine biosynthesis via salvage pathway; L-methionine from S-methyl-5-thio-alpha-D-ribose 1-phosphate: step 2/6. Functionally, catalyzes the dehydration of methylthioribulose-1-phosphate (MTRu-1-P) into 2,3-diketo-5-methylthiopentyl-1-phosphate (DK-MTP-1-P). In Gluconobacter oxydans (strain 621H) (Gluconobacter suboxydans), this protein is Methylthioribulose-1-phosphate dehydratase.